A 132-amino-acid polypeptide reads, in one-letter code: Phosphoribosyl-AMP cyclohydrolase (132 aa).

Asp81 is a binding site for Mg(2+). Cys82 is a binding site for Zn(2+). Residues Asp83 and Asp85 each contribute to the Mg(2+) site. 2 residues coordinate Zn(2+): Cys99 and Cys106.

The protein belongs to the PRA-CH family. Homodimer. It depends on Mg(2+) as a cofactor. Zn(2+) serves as cofactor.

The protein localises to the cytoplasm. The enzyme catalyses 1-(5-phospho-beta-D-ribosyl)-5'-AMP + H2O = 1-(5-phospho-beta-D-ribosyl)-5-[(5-phospho-beta-D-ribosylamino)methylideneamino]imidazole-4-carboxamide. Its pathway is amino-acid biosynthesis; L-histidine biosynthesis; L-histidine from 5-phospho-alpha-D-ribose 1-diphosphate: step 3/9. In terms of biological role, catalyzes the hydrolysis of the adenine ring of phosphoribosyl-AMP. This Chromobacterium violaceum (strain ATCC 12472 / DSM 30191 / JCM 1249 / CCUG 213 / NBRC 12614 / NCIMB 9131 / NCTC 9757 / MK) protein is Phosphoribosyl-AMP cyclohydrolase.